Consider the following 249-residue polypeptide: DNA repair protein RecO (249 aa).

This sequence belongs to the RecO family.

In terms of biological role, involved in DNA repair and RecF pathway recombination. This chain is DNA repair protein RecO, found in Lawsonia intracellularis (strain PHE/MN1-00).